Reading from the N-terminus, the 308-residue chain is MRKLVVGSRRSKLALTQSQQFINKLKAVEPNLEIEIKEIVTKGDRIVDKQLSKVGGKGLFVKEIQHELFEKNIDMAIHSLKDVPSVIPEGLTLGCIPDRELPFDAYISKTHTPLSQLPEGSIIGTSSLRRGAQILSKYPNLEIKWIRGNIDTRLEKLQTEDYDAIILAAAGLRRMGWSDDIVTSYLDRDTLLPAIGQGALGIECRSDDEELLTLLSKVHNDEVAKCVTAERTFLAEMDGSCQVPIAGYATISDQKEIEFTGLIMTPDGKERFEYTMNGTDPVELGKTVSNKLKEQGAYEIIKRLNEQH.

The residue at position 241 (C241) is an S-(dipyrrolylmethanemethyl)cysteine.

The protein belongs to the HMBS family. As to quaternary structure, monomer. Dipyrromethane is required as a cofactor.

The enzyme catalyses 4 porphobilinogen + H2O = hydroxymethylbilane + 4 NH4(+). It functions in the pathway porphyrin-containing compound metabolism; protoporphyrin-IX biosynthesis; coproporphyrinogen-III from 5-aminolevulinate: step 2/4. Its function is as follows. Tetrapolymerization of the monopyrrole PBG into the hydroxymethylbilane pre-uroporphyrinogen in several discrete steps. This is Porphobilinogen deaminase from Staphylococcus aureus (strain Mu50 / ATCC 700699).